The chain runs to 156 residues: Small ribosomal subunit protein uS7 (156 aa).

The protein belongs to the universal ribosomal protein uS7 family. In terms of assembly, part of the 30S ribosomal subunit. Contacts proteins S9 and S11.

Functionally, one of the primary rRNA binding proteins, it binds directly to 16S rRNA where it nucleates assembly of the head domain of the 30S subunit. Is located at the subunit interface close to the decoding center, probably blocks exit of the E-site tRNA. In Bacillus cereus (strain G9842), this protein is Small ribosomal subunit protein uS7.